We begin with the raw amino-acid sequence, 385 residues long: MFLGALWLLLLLPLRPPGAQGQEADEPTPWPSVKGLKEQLRKAGALSKRYWELFSCTLWPDHCEDQETPVPPLGWSLPLWGRRSLDVLTAWLCRFQDCCSGGGDCRISNNLTGLESDLRVRLHGQHLASKLVLRAVKGYLEMPQVGKALALSFHGWSGTGKNFLARILMDNLYRDGMRSDCVKMFISTFHFPHPKYVDTYKEELQRQMQETQWRCHQSTFVFDEAEKLHPGLLELLEPYLEPRSPEARGVEAPRAIFLFLSNLGGSVINEVVLSLLKAGWSREEITTQHLEVPLQAEIMEAADSSFGSSGLLKKHLIDHFIPFLPLEYCHVRLCVRDAFLGQDLPYTEETLDEIAKMMTYVPEEERLFSSQGCKSISQRINLFLP.

The N-terminal stretch at 1-21 is a signal peptide; it reads MFLGALWLLLLLPLRPPGAQG. Asparagine 110 is a glycosylation site (N-linked (GlcNAc...) asparagine). Residue 155–162 participates in ATP binding; that stretch reads GWSGTGKN.

It belongs to the ClpA/ClpB family. Torsin subfamily. As to quaternary structure, interacts with TOR1AIP1. Post-translationally, N-glycosylated.

The protein resides in the cytoplasm. It localises to the endoplasmic reticulum lumen. This chain is Torsin-3A (Tor3a), found in Mus musculus (Mouse).